Consider the following 279-residue polypeptide: MTDLAAKPGIRTVFIVSDGTGITAETFSHSILAQFEMKFRQVRIPFVDTVDKAHVAVSKINEAFHVEGMKPIVFTTLVDAEANRIVHQARATILDMFQTFIEPLERELGLKSSHAIGRFHQNADTEAYKNRIEAINFSLAHDDGQSHKNLAEADVILVGVSRSGKTPTSLYLAMQYGVKSANYPLIPDDFERGKLPTVLYEYKSKIFGLTIDPQRLSEIRNERRPGSKYAALENCRYEVNEAETLMRRESIKWLSSTHKSIEEIATTILQDIKMERDAY.

159–166 serves as a coordination point for ADP; that stretch reads GVSRSGKT.

It belongs to the pyruvate, phosphate/water dikinase regulatory protein family. PSRP subfamily.

The catalysed reaction is [pyruvate, water dikinase] + ADP = [pyruvate, water dikinase]-phosphate + AMP + H(+). It carries out the reaction [pyruvate, water dikinase]-phosphate + phosphate + H(+) = [pyruvate, water dikinase] + diphosphate. Functionally, bifunctional serine/threonine kinase and phosphorylase involved in the regulation of the phosphoenolpyruvate synthase (PEPS) by catalyzing its phosphorylation/dephosphorylation. The polypeptide is Putative phosphoenolpyruvate synthase regulatory protein (Ralstonia nicotianae (strain ATCC BAA-1114 / GMI1000) (Ralstonia solanacearum)).